The primary structure comprises 252 residues: Body wall muscle protein HR-29 (252 aa).

Ser-2 is modified (N-acetylserine). A run of 3 repeats spans residues 37 to 55 (RDWMTTPYSSTGIGRRDLS), 56 to 74 (QDWMTTPYTPAGVGRRDLS), and 75 to 93 (QDWMTTPYTSKGIGSRNLS). Positions 37-93 (RDWMTTPYSSTGIGRRDLSQDWMTTPYTPAGVGRRDLSQDWMTTPYTSKGIGSRNLS) are 3 X 19 AA approximate tandem repeats. The sHSP domain occupies 138-249 (ISVEHEGKTT…KKTAVPVTVE (112 aa)).

It belongs to the small heat shock protein (HSP20) family. In terms of assembly, exists as an oligomer.

It is found in the membrane. Its function is as follows. May be a component of myofibrils where it acts as a stabilizer. The sequence is that of Body wall muscle protein HR-29 from Halocynthia roretzi (Sea squirt).